A 92-amino-acid chain; its full sequence is Large ribosomal subunit protein eL43 (92 aa).

The C4-type zinc finger occupies 39 to 60 (CEFCGKFAVKRKAVGIWGCKDC).

Belongs to the eukaryotic ribosomal protein eL43 family.

In Pseudotsuga menziesii (Douglas-fir), this protein is Large ribosomal subunit protein eL43 (RPL37A).